Here is a 298-residue protein sequence, read N- to C-terminus: Bifunctional protein FolD (298 aa).

NADP(+) contacts are provided by residues 165 to 167 (GRS), Ser-190, and Ile-231.

This sequence belongs to the tetrahydrofolate dehydrogenase/cyclohydrolase family. In terms of assembly, homodimer.

It catalyses the reaction (6R)-5,10-methylene-5,6,7,8-tetrahydrofolate + NADP(+) = (6R)-5,10-methenyltetrahydrofolate + NADPH. The enzyme catalyses (6R)-5,10-methenyltetrahydrofolate + H2O = (6R)-10-formyltetrahydrofolate + H(+). The protein operates within one-carbon metabolism; tetrahydrofolate interconversion. Catalyzes the oxidation of 5,10-methylenetetrahydrofolate to 5,10-methenyltetrahydrofolate and then the hydrolysis of 5,10-methenyltetrahydrofolate to 10-formyltetrahydrofolate. The chain is Bifunctional protein FolD from Prochlorococcus marinus (strain AS9601).